Reading from the N-terminus, the 511-residue chain is 2-isopropylmalate synthase (511 aa).

The 264-residue stretch at 6–269 (IIIFDTTLRD…YTDIKCENIF (264 aa)) folds into the Pyruvate carboxyltransferase domain. Aspartate 15, histidine 203, histidine 205, and asparagine 239 together coordinate Mn(2+). The interval 394–511 (VLEKLSVISG…SLKVEERKMA (118 aa)) is regulatory domain.

The protein belongs to the alpha-IPM synthase/homocitrate synthase family. LeuA type 1 subfamily. Homodimer. Mn(2+) serves as cofactor.

It localises to the cytoplasm. It catalyses the reaction 3-methyl-2-oxobutanoate + acetyl-CoA + H2O = (2S)-2-isopropylmalate + CoA + H(+). It participates in amino-acid biosynthesis; L-leucine biosynthesis; L-leucine from 3-methyl-2-oxobutanoate: step 1/4. Functionally, catalyzes the condensation of the acetyl group of acetyl-CoA with 3-methyl-2-oxobutanoate (2-ketoisovalerate) to form 3-carboxy-3-hydroxy-4-methylpentanoate (2-isopropylmalate). This Campylobacter jejuni subsp. jejuni serotype O:2 (strain ATCC 700819 / NCTC 11168) protein is 2-isopropylmalate synthase.